The primary structure comprises 59 residues: Small ribosomal subunit protein bS21 (59 aa).

The segment at 35–59 (REHYEKPSVKKKKKSEAAKRKKRNF) is disordered. The segment covering 43–59 (VKKKKKSEAAKRKKRNF) has biased composition (basic residues).

Belongs to the bacterial ribosomal protein bS21 family.

The sequence is that of Small ribosomal subunit protein bS21 from Finegoldia magna (strain ATCC 29328 / DSM 20472 / WAL 2508) (Peptostreptococcus magnus).